Here is a 64-residue protein sequence, read N- to C-terminus: MPCGCGTSCKCGSGKCCCGSTCNCTTCPSKQSCSCNDGACGSACQCKTSCCCGADCKCSPCPMK.

Residues C3, C5, C9, C11, C16, C18, C22, C24, C27, C33, C40, C44, C50, C52, C56, and C58 each contribute to the Cu(+) site.

Belongs to the metallothionein superfamily. Type 2 family.

In terms of biological role, the metallothioneins are involved in the cellular sequestration of toxic metal ions and regulation of essential trace elements. This isoform binds exclusively copper. The polypeptide is Copper-specific metallothionein-2 (Callinectes sapidus (Blue crab)).